A 298-amino-acid polypeptide reads, in one-letter code: uncharacterized protein (298 aa).

The protein resides in the cytoplasm. Its subcellular location is the nucleus. This is an uncharacterized protein from Schizosaccharomyces pombe (strain 972 / ATCC 24843) (Fission yeast).